Reading from the N-terminus, the 427-residue chain is Serine--tRNA ligase (427 aa).

230 to 232 (TAE) contributes to the L-serine binding site. Position 261-263 (261-263 (RAE)) interacts with ATP. Glutamate 284 serves as a coordination point for L-serine. 348-351 (EISS) contacts ATP. Residue serine 384 participates in L-serine binding.

It belongs to the class-II aminoacyl-tRNA synthetase family. Type-1 seryl-tRNA synthetase subfamily. In terms of assembly, homodimer. The tRNA molecule binds across the dimer.

The protein resides in the cytoplasm. It catalyses the reaction tRNA(Ser) + L-serine + ATP = L-seryl-tRNA(Ser) + AMP + diphosphate + H(+). The catalysed reaction is tRNA(Sec) + L-serine + ATP = L-seryl-tRNA(Sec) + AMP + diphosphate + H(+). It functions in the pathway aminoacyl-tRNA biosynthesis; selenocysteinyl-tRNA(Sec) biosynthesis; L-seryl-tRNA(Sec) from L-serine and tRNA(Sec): step 1/1. Catalyzes the attachment of serine to tRNA(Ser). Is also able to aminoacylate tRNA(Sec) with serine, to form the misacylated tRNA L-seryl-tRNA(Sec), which will be further converted into selenocysteinyl-tRNA(Sec). This Moorella thermoacetica (strain ATCC 39073 / JCM 9320) protein is Serine--tRNA ligase.